The following is a 397-amino-acid chain: Purine ribonucleoside efflux pump NepI (397 aa).

Residues 1–21 lie on the Cytoplasmic side of the membrane; it reads MNENIAEKFRADGVARPNWSA. A helical transmembrane segment spans residues 22-42; sequence VFAVAFCVACLITVEFLPVSL. The Periplasmic segment spans residues 43–54; that stretch reads LTPMAQDLGISE. The helical transmembrane segment at 55–75 threads the bilayer; it reads GVAGQSVTVTAFVAMFSSLFI. Topologically, residues 76–85 are cytoplasmic; that stretch reads TQIIQATDRR. Residues 86–106 form a helical membrane-spanning segment; that stretch reads YIVILFAVLLTASCLMVSFAN. Residue serine 107 is a topological domain, periplasmic. Residues 108–128 traverse the membrane as a helical segment; sequence FTLLLLGRACLGLALGGFWAM. The Cytoplasmic portion of the chain corresponds to 129–147; sequence SASLTMRLVPARTVPKALS. The chain crosses the membrane as a helical span at residues 148–168; it reads VIFGAVSIALVIAAPLGSFLG. Topologically, residues 169–175 are periplasmic; the sequence is GIIGWRN. A helical membrane pass occupies residues 176-196; it reads VFNAAAVMGVLCVIWVVKSLP. Over 197–215 the chain is Cytoplasmic; sequence SLPGEPSHQKQNMFSLLQR. Residues 216-236 form a helical membrane-spanning segment; sequence PGVMAGMIAIFMSFAGQFAFF. At 237 to 255 the chain is on the periplasmic side; it reads TYIRPVYMNLAGFDVDGLT. A helical membrane pass occupies residues 256-276; sequence LVLLSFGIASFVGTSFSSYVL. Topologically, residues 277–281 are cytoplasmic; it reads KRSVK. Residues 282–302 form a helical membrane-spanning segment; that stretch reads LALAGAPLLLALSALTLIVWG. Residues 303–305 are Periplasmic-facing; it reads SDK. Residues 306-326 traverse the membrane as a helical segment; it reads TVAAVIAIIWGLAFALVPVGW. The Cytoplasmic segment spans residues 327-343; the sequence is STWITRSLADQAEKAGS. The helical transmembrane segment at 344 to 364 threads the bilayer; the sequence is IQVAVIQLANTCGAAVGGYAL. Residues 365-366 lie on the Periplasmic side of the membrane; that stretch reads DN. A helical transmembrane segment spans residues 367-387; it reads FGLLSPLALSGGLMLLTALVV. Topologically, residues 388 to 397 are cytoplasmic; sequence AAKVRITPMS.

Belongs to the major facilitator superfamily. DHA1 family. NepI (TC 2.A.1.2.26) subfamily.

Its subcellular location is the cell inner membrane. The enzyme catalyses inosine(in) + H(+)(out) = inosine(out) + H(+)(in). It catalyses the reaction guanosine(in) + H(+)(out) = guanosine(out) + H(+)(in). In terms of biological role, involved in the efflux of purine ribonucleosides, such as inosine and guanosine. The polypeptide is Purine ribonucleoside efflux pump NepI (Salmonella paratyphi B (strain ATCC BAA-1250 / SPB7)).